We begin with the raw amino-acid sequence, 352 residues long: Transcription factor RSL2 (352 aa).

Residues 160-169 show a composition bias toward polar residues; that stretch reads SVTTTKSLTG. Residues 160 to 277 form a disordered region; it reads SVTTTKSLTG…ASRGAATDPQ (118 aa). Over residues 183–192 the composition is skewed to basic residues; the sequence is KRARVNKRAQ. Positions 223 to 232 are enriched in polar residues; the sequence is SRQNSSTTFC. The interval 272-285 is basic motif; it reads AATDPQSLYARKRR. Residues 272-321 form the bHLH domain; sequence AATDPQSLYARKRRERINERLRILQNLVPNGTKVDISTMLEEAVHYVKFL. Residues 286–321 are helix-loop-helix motif; it reads ERINERLRILQNLVPNGTKVDISTMLEEAVHYVKFL.

As to quaternary structure, homodimer. Expressed in roots. Expressed in root epidermal hair cells.

Its subcellular location is the nucleus. Its function is as follows. Transcription factor involved in the regulation of root hair elongation. Does not seem to be a direct transcriptional target of RHD6 and RSL1. Involved in the regulation of root hair elongation in response to low phosphate. The sequence is that of Transcription factor RSL2 from Arabidopsis thaliana (Mouse-ear cress).